A 428-amino-acid polypeptide reads, in one-letter code: GTPase Obg (428 aa).

The Obg domain occupies 1–158 (MFVDQVKIYV…RDVILELKVL (158 aa)). The region spanning 159-329 (ADVGLVGFPS…LLFEVANLIE (171 aa)) is the OBG-type G domain. Residues 165-172 (GFPSVGKS), 190-194 (FTTIV), 212-215 (DLPG), 282-285 (NKMD), and 310-312 (SAV) contribute to the GTP site. The Mg(2+) site is built by Ser172 and Thr192. One can recognise an OCT domain in the interval 350–428 (KFETEGVKFD…ILEYEFEFID (79 aa)).

This sequence belongs to the TRAFAC class OBG-HflX-like GTPase superfamily. OBG GTPase family. In terms of assembly, monomer. The cofactor is Mg(2+).

It localises to the cytoplasm. Functionally, an essential GTPase which binds GTP, GDP and possibly (p)ppGpp with moderate affinity, with high nucleotide exchange rates and a fairly low GTP hydrolysis rate. Plays a role in control of the cell cycle, stress response, ribosome biogenesis and in those bacteria that undergo differentiation, in morphogenesis control. In Bacillus thuringiensis (strain Al Hakam), this protein is GTPase Obg.